Consider the following 740-residue polypeptide: Ion-translocating oxidoreductase complex subunit C (740 aa).

2 consecutive 4Fe-4S ferredoxin-type domains span residues 369–397 (GEPQEEQSCIRCSACADACPADLLPQQLY) and 407–436 (KATTHNIADCIECGACAWVCPSNIPLVQYF). [4Fe-4S] cluster contacts are provided by cysteine 377, cysteine 380, cysteine 383, cysteine 387, cysteine 416, cysteine 419, cysteine 422, and cysteine 426. The tract at residues 602–716 (KLEQQQANAE…EPEEQVDPRK (115 aa)) is disordered.

The protein belongs to the 4Fe4S bacterial-type ferredoxin family. RnfC subfamily. As to quaternary structure, the complex is composed of six subunits: RsxA, RsxB, RsxC, RsxD, RsxE and RsxG. [4Fe-4S] cluster is required as a cofactor.

Its subcellular location is the cell inner membrane. In terms of biological role, part of a membrane-bound complex that couples electron transfer with translocation of ions across the membrane. Required to maintain the reduced state of SoxR. In Escherichia coli O139:H28 (strain E24377A / ETEC), this protein is Ion-translocating oxidoreductase complex subunit C.